A 161-amino-acid chain; its full sequence is Copper transporter 1 (161 aa).

2 helical membrane-spanning segments follow: residues 55–75 (GGMY…VEFL) and 109–129 (VAYL…LVAV).

This sequence belongs to the copper transporter (Ctr) (TC 1.A.56) family. SLC31A subfamily. Self-interacts. Interacts with SWEET11 and COPT2.

Its subcellular location is the cell membrane. Its function is as follows. Involved in the transport of copper, in cooperation with SWEET11 and COPT2. Contributes to the removal of copper (Cu) from xylem, and thus to the sensitivity toward bacterial pathogens such as X.oryzae pv. oryzae (Xoo). This is Copper transporter 1 (COPT1) from Oryza sativa subsp. japonica (Rice).